A 2262-amino-acid chain; its full sequence is Klarsicht protein (2262 aa).

Disordered stretches follow at residues 1-140 (MEMQ…VGND), 345-410 (QQQQ…GEGN), 442-475 (AANG…LNEV), 514-561 (QSQS…PDIG), 800-832 (ATSS…DKEN), 859-898 (SNYD…QLQM), 1000-1031 (HLPP…VSPV), 1115-1157 (PSCK…SEGF), 1246-1316 (SGLA…ELGG), and 1533-1670 (VRRK…QQSR). Residues 1-1774 (MEMQQENETG…KPTPELLDTE (1774 aa)) are required for apical microtubules localization. The Cytoplasmic segment spans residues 1–2215 (MEMQQENETG…KRGWAWRIAR (2215 aa)). The span at 58–67 (KIEHTTKPLK) shows a compositional bias: basic and acidic residues. Positions 131 to 140 (NYGTNSVGND) are enriched in polar residues. The segment covering 345-402 (QQQQLSSQQPASLTSNCSSESTSESATKSSSLSSGFASDPVTTPIGTAAAAPPSSSTH) has biased composition (low complexity). A compositionally biased stretch (acidic residues) spans 446 to 475 (LDDDEDEEEDTEDDSFGYEGEATEDDLNEV). Positions 514-525 (QSQSRSQQVPSQ) are enriched in low complexity. The segment covering 546–560 (EADEELEEEDEDPDI) has biased composition (acidic residues). 2 stretches are compositionally biased toward low complexity: residues 809–818 (STAVSSTTAT) and 859–881 (SNYD…SNSN). A compositionally biased stretch (polar residues) spans 882 to 894 (GRLTETSATSRVT). Residues 1006-1018 (PAKSAKSTKSQAS) show a composition bias toward low complexity. A compositionally biased stretch (polar residues) spans 1019–1028 (NATVSGSTLV). Positions 1246–1259 (SGLASHSISESALD) are enriched in polar residues. Residues 1267–1280 (PRAASSSGTGSNAA) show a composition bias toward low complexity. Over residues 1288–1299 (SLRRRKARKKRI) the composition is skewed to basic residues. Residues 1550–1559 (QSDQQQQQLQ) show a composition bias toward low complexity. Residues 1560–1583 (VTPSLSASATALMTTPKNQSTSHQ) show a composition bias toward polar residues. Basic and acidic residues-rich tracts occupy residues 1586–1596 (HRAESVGRKLD) and 1610–1640 (RTSE…EKCI). Residues 1809-1842 (LTKQERRLQSALEEQEQQQESEQLKQQKLVEEEK) are a coiled coil. Positions 2092 to 2205 (HQQKQQIQQN…GEGADPAQTS (114 aa)) are disordered. The span at 2093 to 2105 (QQKQQIQQNQTQQ) shows a compositional bias: low complexity. Positions 2130-2142 (RRGKGARKARQAK) are enriched in basic residues. The KASH domain maps to 2207–2262 (RGWAWRIARAAVPMQVALFTIFCAACLMQPNCCDNLNNLSMSFTPQLRYIRGPPPI). The chain crosses the membrane as a helical; Anchor for type IV membrane protein span at residues 2216–2236 (AAVPMQVALFTIFCAACLMQP). The Perinuclear space portion of the chain corresponds to 2237–2262 (NCCDNLNNLSMSFTPQLRYIRGPPPI).

This sequence belongs to the nesprin family. As to quaternary structure, core component of LINC complexes which are composed of inner nuclear membrane SUN domain-containing proteins coupled to outer nuclear membrane KASH domain-containing nesprins. Interacts with kud. Interacts with Msp300; this interaction allows the anchoring of Msp300 nuclear ring structure to the nuclear envelope. Expressed ubiquitously in the eye disk, but at much higher levels posterior to the morphogenetic furrow. Expressed in R-cells and also in non-neural cone cells.

The protein localises to the cytoplasm. It localises to the cytoskeleton. It is found in the microtubule organizing center. Its subcellular location is the perinuclear region. The protein resides in the nucleus membrane. The protein localises to the nucleus envelope. Component of the LINC (LInker of Nucleoskeleton and Cytoskeleton) complex involved in the connection between the nuclear lamina and the cytoskeleton. Plays a role in the nuclear positioning and links the nucleus to the microtubule organizing center (MTOC). Collaborates with Klar to promote even spacing of the myonuclei at the periphery of striated muscle fibers by mediating a tight association between a nuclear ring structure of Msp300 and the plus ends of a unique astral microtubule (MT) network. The chain is Klarsicht protein from Drosophila melanogaster (Fruit fly).